The primary structure comprises 510 residues: Leucine-rich repeat protein lrrA (510 aa).

LRR repeat units lie at residues 14–34 (YRKREIVDLRKMNIDKLPPTI), 35–59 (GALQCKELLLSENDLITIPEEIGKL), 60–82 (SKVEIIDFAKNRINYIPPEIGSL), 84–106 (TLKQLFLSNNKLFYTPITPNIGA), 107–130 (LKNLTRLDLSSNQLDDLPVEISNC), 132–152 (ALEYLDISDNQLQSFPLEFGK), 153–176 (LYNLQVFNCSKNSLKSLPSEISGW), 177–200 (VKLEELNVSNNQLAFLPNQICLLG), 202–222 (LSTLNVGFNKLQQLPEELSSM), 224–245 (SLTNLDLKVNPPLQYVPQLSNL), 246–270 (RQLKILSIRNLQITHLPLGLGLLSE), 272–292 (IELDIRDNPQLKEIPYDIATL), 293–315 (INLQKLDLFGNNMRIVPREVGNL), 316–340 (INLQTLDLRQNKLTIDNIPSEIGKL), 341–363 (VNLKKLLLSNNLLIALPPEIASM), 365–386 (ALKEFEASNNQLQAIPTEIGEL), 387–408 (SGLTKINLSGNKLTSIPASFGN), 410–432 (SELQICDLKSNEIAELPTTLDGL), 433–458 (KSCTKIDLSHNMLTELPWEFGDLIGL), and 460–478 (ILDVGHNPLTIPPNPIVMK).

It is found in the cytoplasm. In terms of biological role, involved in cytoskeleton remodeling, which is needed for normal chemotactic aggregation and efficient cell sorting during multicellular morphogenesis. The sequence is that of Leucine-rich repeat protein lrrA (lrrA) from Dictyostelium discoideum (Social amoeba).